The following is a 277-amino-acid chain: Large ribosomal subunit protein uL2 (277 aa).

The segment at 222 to 265 (GVAMNPIDHPHGGGEGRTSGGRHPVTPWGKPTKGKKTRTNKSTD) is disordered.

Belongs to the universal ribosomal protein uL2 family. As to quaternary structure, part of the 50S ribosomal subunit. Forms a bridge to the 30S subunit in the 70S ribosome.

In terms of biological role, one of the primary rRNA binding proteins. Required for association of the 30S and 50S subunits to form the 70S ribosome, for tRNA binding and peptide bond formation. It has been suggested to have peptidyltransferase activity; this is somewhat controversial. Makes several contacts with the 16S rRNA in the 70S ribosome. This is Large ribosomal subunit protein uL2 from Bradyrhizobium sp. (strain BTAi1 / ATCC BAA-1182).